Reading from the N-terminus, the 224-residue chain is Heme response regulator HssR (224 aa).

Residues 3–116 (TCLIVDDDPK…ELMFRIKAVL (114 aa)) form the Response regulatory domain. Asp52 bears the 4-aspartylphosphate mark. A DNA-binding region (ompR/PhoB-type) is located at residues 124-222 (NNEVSIGNLT…VRGLGYKVDD (99 aa)).

Post-translationally, phosphorylated by HssS.

The protein resides in the cytoplasm. In terms of biological role, member of the two-component regulatory system HssS/HssR involved in intracellular heme homeostasis and tempering of staphylococcal virulence. Phosphorylated HssR binds to a direct repeat sequence within hrtAB promoter and activates the expression of hrtAB, an efflux pump, in response to extracellular heme, hemin, hemoglobin or blood. The polypeptide is Heme response regulator HssR (hssR) (Staphylococcus saprophyticus subsp. saprophyticus (strain ATCC 15305 / DSM 20229 / NCIMB 8711 / NCTC 7292 / S-41)).